Here is a 343-residue protein sequence, read N- to C-terminus: Cytoplasmic tRNA 2-thiolation protein 1 (343 aa).

This sequence belongs to the TtcA family. CTU1/NCS6/ATPBD3 subfamily.

It localises to the cytoplasm. The protein operates within tRNA modification; 5-methoxycarbonylmethyl-2-thiouridine-tRNA biosynthesis. Functionally, plays a central role in 2-thiolation of mcm(5)S(2)U at tRNA wobble positions of tRNA(Lys), tRNA(Glu) and tRNA(Gln). Directly binds tRNAs and probably acts by catalyzing adenylation of tRNAs, an intermediate required for 2-thiolation. It is unclear whether it acts as a sulfurtransferase that transfers sulfur from thiocarboxylated URM1 onto the uridine of tRNAs at wobble position. The chain is Cytoplasmic tRNA 2-thiolation protein 1 from Drosophila virilis (Fruit fly).